We begin with the raw amino-acid sequence, 909 residues long: Epithelial discoidin domain-containing receptor 1 (909 aa).

The signal sequence occupies residues 1–18 (MGPEALSSLLLLLLVASG). Residues 21–413 (DMKGHFDPAK…VAKAEGSPTA (393 aa)) lie on the Extracellular side of the membrane. Residues 31-181 (CRYALGMQDR…VCLRVELYGC (151 aa)) form the F5/8 type C domain. Disulfide bonds link cysteine 31–cysteine 181 and cysteine 70–cysteine 173. Residues 45 to 60 (SDISASSSWSDSTAAR) are compositionally biased toward low complexity. Residues 45–65 (SDISASSSWSDSTAARHSSDG) form a disordered region. The DS-like domain stretch occupies residues 188-363 (LSYTAPVGQT…LFSEISFISD (176 aa)). 6 residues coordinate Ca(2+): asparagine 207, glutamine 226, aspartate 229, valine 231, tyrosine 249, and tyrosine 251. Residue asparagine 207 is glycosylated (N-linked (GlcNAc...) asparagine). N-linked (GlcNAc...) asparagine glycosylation is present at asparagine 256. An intrachain disulfide couples cysteine 299 to cysteine 344. Ca(2+)-binding residues include serine 356 and glutamate 357. N-linked (GlcNAc...) asparagine glycosylation is found at asparagine 366 and asparagine 390. A helical transmembrane segment spans residues 414 to 434 (ILIGCLVAIILLLLLIIALML). The Cytoplasmic portion of the chain corresponds to 435 to 909 (WRLHWRRLLS…FLAEDALNTV (475 aa)). Residues 466 to 495 (ILINNRPGPREPPPYQEPRPRGNPPHSAPC) form a disordered region. Residues 475–492 (REPPPYQEPRPRGNPPHS) show a composition bias toward pro residues. Positions 477 to 480 (PPPY) match the PPxY motif motif. Phosphotyrosine; by autocatalysis is present on residues tyrosine 480, tyrosine 509, and tyrosine 516. A Protein kinase domain is found at 606 to 901 (LRFKEKLGEG…PPFSQLHRFL (296 aa)). ATP is bound at residue 612–620 (LGEGQFGEV). Position 627 is a phosphoserine (serine 627). Lysine 651 lines the ATP pocket. Tyrosine 736 carries the phosphotyrosine; by autocatalysis modification. Aspartate 762 functions as the Proton acceptor in the catalytic mechanism. Phosphotyrosine; by autocatalysis occurs at positions 788, 792, and 793.

The protein belongs to the protein kinase superfamily. Tyr protein kinase family. Insulin receptor subfamily. Homodimer. Interacts (via PPxY motif) with WWC1 (via WW domains) in a collagen-regulated manner. Forms a tripartite complex with WWC1 and PRKCZ, but predominantly in the absence of collagen. Interacts (tyrosine phosphorylated) with SHC1. Interacts with SRC. Interacts with MYH9. Interacts with CDH1. Interacts with PTPN11. Interacts with NCK2. Post-translationally, autophosphorylated in response to fibrillar collagen binding.

It localises to the cell membrane. It catalyses the reaction L-tyrosyl-[protein] + ATP = O-phospho-L-tyrosyl-[protein] + ADP + H(+). Tyrosine kinase that functions as a cell surface receptor for fibrillar collagen and regulates cell attachment to the extracellular matrix, remodeling of the extracellular matrix, cell migration, differentiation, survival and cell proliferation. Collagen binding triggers a signaling pathway that involves SRC and leads to the activation of MAP kinases. Regulates remodeling of the extracellular matrix by up-regulation of the matrix metalloproteinases MMP2, MMP7 and MMP9, and thereby facilitates cell migration and wound healing. Promotes smooth muscle cell migration, and thereby contributes to arterial wound healing. Also plays a role in tumor cell invasion. Phosphorylates PTPN11. Required for normal blastocyst implantation during pregnancy, for normal mammary gland differentiation and normal lactation. Required for normal ear morphology and normal hearing. The sequence is that of Epithelial discoidin domain-containing receptor 1 (DDR1) from Pan troglodytes (Chimpanzee).